The sequence spans 104 residues: Translation initiation factor 1A (104 aa).

Residues 1-14 show a composition bias toward low complexity; sequence MRGQQAPPQQPTRV. Residues 1–20 form a disordered region; it reads MRGQQAPPQQPTRVRTPREN. Residues 12 to 87 form the S1-like domain; sequence TRVRTPRENE…EKCDVIWRYT (76 aa).

It belongs to the eIF-1A family.

Its function is as follows. Seems to be required for maximal rate of protein biosynthesis. Enhances ribosome dissociation into subunits and stabilizes the binding of the initiator Met-tRNA(I) to 40 S ribosomal subunits. The protein is Translation initiation factor 1A (eIF1A) of Methanococcus maripaludis (strain C6 / ATCC BAA-1332).